The chain runs to 232 residues: Enolase-phosphatase E1 (232 aa).

It belongs to the HAD-like hydrolase superfamily. MasA/MtnC family. As to quaternary structure, monomer. Requires Mg(2+) as cofactor.

It carries out the reaction 5-methylsulfanyl-2,3-dioxopentyl phosphate + H2O = 1,2-dihydroxy-5-(methylsulfanyl)pent-1-en-3-one + phosphate. It participates in amino-acid biosynthesis; L-methionine biosynthesis via salvage pathway; L-methionine from S-methyl-5-thio-alpha-D-ribose 1-phosphate: step 3/6. The protein operates within amino-acid biosynthesis; L-methionine biosynthesis via salvage pathway; L-methionine from S-methyl-5-thio-alpha-D-ribose 1-phosphate: step 4/6. Bifunctional enzyme that catalyzes the enolization of 2,3-diketo-5-methylthiopentyl-1-phosphate (DK-MTP-1-P) into the intermediate 2-hydroxy-3-keto-5-methylthiopentenyl-1-phosphate (HK-MTPenyl-1-P), which is then dephosphorylated to form the acireductone 1,2-dihydroxy-3-keto-5-methylthiopentene (DHK-MTPene). This Xylella fastidiosa (strain M12) protein is Enolase-phosphatase E1.